The primary structure comprises 147 residues: Interleukin-4 (147 aa).

An N-terminal signal peptide occupies residues 1 to 19 (MGLRPQLAAILLCLLACTG). 4 N-linked (GlcNAc...) asparagine glycosylation sites follow: N20, N61, N90, and N117. Intrachain disulfides connect C47–C87 and C69–C114.

The protein belongs to the IL-4/IL-13 family.

It is found in the secreted. Its function is as follows. Participates in at least several B-cell activation processes as well as of other cell types. It is a costimulator of DNA-synthesis. It induces the expression of class II MHC molecules on resting B-cells. It enhances both secretion and cell surface expression of IgE and IgG1. It also regulates the expression of the low affinity Fc receptor for IgE (CD23) on both lymphocytes and monocytes. Positively regulates IL31RA expression in macrophages. Stimulates autophagy in dendritic cells by interfering with mTORC1 signaling and through the induction of RUFY4. The chain is Interleukin-4 (IL4) from Mesocricetus auratus (Golden hamster).